The sequence spans 60 residues: L-amino-acid oxidase (60 aa).

1–4 contacts FAD; it reads GPMR. Arg-4 serves as a coordination point for substrate.

This sequence belongs to the flavin monoamine oxidase family. FIG1 subfamily. Homodimer; non-covalently linked. FAD serves as cofactor. Contains 2 disulfide bonds. Post-translationally, N-glycosylated. Expressed by the venom gland.

Its subcellular location is the secreted. The catalysed reaction is an L-alpha-amino acid + O2 + H2O = a 2-oxocarboxylate + H2O2 + NH4(+). Catalyzes an oxidative deamination of predominantly hydrophobic and aromatic L-amino acids, thus producing hydrogen peroxide that may contribute to the diverse toxic effects of this enzyme. Exhibits diverse biological activities, such as hemorrhage, hemolysis, edema, apoptosis of vascular endothelial cells or tumor cell lines, antibacterial and antiparasitic activities, as well as regulation of platelet aggregation. Effects of snake L-amino oxidases on platelets are controversial, since they either induce aggregation or inhibit agonist-induced aggregation. These different effects are probably due to different experimental conditions. The sequence is that of L-amino-acid oxidase from Bitis gabonica (Gaboon adder).